The chain runs to 166 residues: UPF0336 protein ML2425 (166 aa).

A MaoC-like domain is found at 10-131 (LIGKHYRQLD…VIAEVRSEVT (122 aa)).

The protein belongs to the UPF0336 family.

This is UPF0336 protein ML2425 from Mycobacterium leprae (strain TN).